The chain runs to 39 residues: Fuctinin-3 (39 aa).

The tract at residues 1–39 (KELNSNHDGADETSEKEQQEAIEHIDEVQNEIDRLNETA) is disordered.

The protein to human SET/PHAPII protein. In terms of assembly, oligomer.

Its subcellular location is the cytoplasm. Its function is as follows. Has a role in the physiological regulation of fucosylation processes. The chain is Fuctinin-3 from Rattus norvegicus (Rat).